Here is a 146-residue protein sequence, read N- to C-terminus: UPF0735 ACT domain-containing protein Cphy_3604 (146 aa).

An ACT domain is found at 70-145 (TFMLQMDDIP…GIHYLKILGR (76 aa)).

The protein belongs to the UPF0735 family.

This chain is UPF0735 ACT domain-containing protein Cphy_3604, found in Lachnoclostridium phytofermentans (strain ATCC 700394 / DSM 18823 / ISDg) (Clostridium phytofermentans).